A 155-amino-acid chain; its full sequence is 3-hydroxyacyl-[acyl-carrier-protein] dehydratase FabZ (155 aa).

His-61 is an active-site residue.

This sequence belongs to the thioester dehydratase family. FabZ subfamily.

The protein localises to the cytoplasm. It carries out the reaction a (3R)-hydroxyacyl-[ACP] = a (2E)-enoyl-[ACP] + H2O. Its function is as follows. Involved in unsaturated fatty acids biosynthesis. Catalyzes the dehydration of short chain beta-hydroxyacyl-ACPs and long chain saturated and unsaturated beta-hydroxyacyl-ACPs. The chain is 3-hydroxyacyl-[acyl-carrier-protein] dehydratase FabZ from Synechococcus sp. (strain ATCC 27144 / PCC 6301 / SAUG 1402/1) (Anacystis nidulans).